Here is a 256-residue protein sequence, read N- to C-terminus: Protein FixA (256 aa).

Belongs to the ETF beta-subunit/FixA family. In terms of assembly, heterodimer of FixA and FixB.

Its pathway is amine and polyamine metabolism; carnitine metabolism. Required for anaerobic carnitine reduction. May bring reductant to CaiA. This chain is Protein FixA, found in Salmonella agona (strain SL483).